Consider the following 410-residue polypeptide: E3 SUMO-protein ligase EGR2 (410 aa).

Positions 68–83 (PPASTTASSSVTSASP) are enriched in low complexity. 3 disordered regions span residues 68–95 (PPAS…GVCT), 101–120 (PELD…SGCT), and 127–151 (PSAF…SYPS). The short motif at 104-107 (DHLY) is the HCFC1-binding-motif (HBM) element. A compositionally biased stretch (low complexity) spans 127–143 (PSAFLSPPTTSTSSLAY). Lys188 is subject to N6-acetyllysine. The tract at residues 217 to 286 (PSAGVTGPGA…PYPCPAEGCD (70 aa)) is disordered. The span at 222-231 (TGPGASGGSE) shows a compositional bias: gly residues. Over residues 237–248 (GSGSAAVTTSPY) the composition is skewed to polar residues. C2H2-type zinc fingers lie at residues 278–302 (YPCP…IRIH), 308–330 (FQCR…IRTH), and 336–358 (FACD…TKIH). The tract at residues 349–410 (DERKRHTKIH…LACTSRTRTP (62 aa)) is disordered. Residues 353–363 (RHTKIHLRQKE) are compositionally biased toward basic residues. Over residues 367–380 (SAPSSSASAQPSAS) the composition is skewed to low complexity.

The protein belongs to the EGR C2H2-type zinc-finger protein family. Interacts with HCFC1. Interacts with WWP2. Interacts with UBC9. Interacts with CITED1. Interacts (via phosphorylated form) with SFN. Ubiquitinated by WWP2 leading to proteasomal degradation. Post-translationally, acetylated. May be deacetylated by HDAC6, HDAC10 or SIRT1.

It is found in the nucleus. The protein operates within protein modification; protein sumoylation. Sequence-specific DNA-binding transcription factor. Plays a role in hindbrain segmentation by regulating the expression of a subset of homeobox containing genes and in Schwann cell myelination by regulating the expression of genes involved in the formation and maintenance of myelin. Binds to two EGR2-consensus sites EGR2A (5'-CTGTAGGAG-3') and EGR2B (5'-ATGTAGGTG-3') in the HOXB3 enhancer and promotes HOXB3 transcriptional activation. Binds to specific DNA sites located in the promoter region of HOXA4, HOXB2 and ERBB2. Regulates hindbrain segmentation by controlling the expression of Hox genes, such as HOXA4, HOXB3 and HOXB2, and thereby specifying odd and even rhombomeres. Promotes the expression of HOXB3 in the rhombomere r5 in the hindbrain. Regulates myelination in the peripheral nervous system after birth, possibly by regulating the expression of myelin proteins, such as MPZ, and by promoting the differentiation of Schwann cells. Involved in the development of the jaw openener musculature, probably by playing a role in its innervation through trigeminal motor neurons. May play a role in adipogenesis, possibly by regulating the expression of CEBPB. Its function is as follows. E3 SUMO-protein ligase helping SUMO1 conjugation to its coregulators NAB1 and NAB2, whose sumoylation down-regulates EGR2 transcriptional activity. This is E3 SUMO-protein ligase EGR2 (EGR2) from Cricetulus griseus (Chinese hamster).